Consider the following 181-residue polypeptide: Capsid protein VP4 (181 aa).

It is found in the virion. Its function is as follows. VP4 self-assembles to form, together with capsid protein VP10, an icosahedral caspid of 87 nm in diameter, with a T=43 symmetry and composed of 420 hexamers and 12 pentamers. VP4 proteins arrange into hexons, while VP10 proteins form the pentameric densities located at the 5-fold axes in the virion. The stoichiometry of VP4:VP10 is 42:1. This is Capsid protein VP4 from Sulfolobus (SPV1).